The following is a 162-amino-acid chain: NADH-quinone oxidoreductase subunit I (162 aa).

4Fe-4S ferredoxin-type domains follow at residues 52–82 (LRRY…IEAG) and 93–122 (TRYD…EGPN). Residues cysteine 62, cysteine 65, cysteine 68, cysteine 72, cysteine 102, cysteine 105, cysteine 108, and cysteine 112 each contribute to the [4Fe-4S] cluster site.

The protein belongs to the complex I 23 kDa subunit family. In terms of assembly, NDH-1 is composed of 14 different subunits. Subunits NuoA, H, J, K, L, M, N constitute the membrane sector of the complex. [4Fe-4S] cluster is required as a cofactor.

The protein resides in the cell inner membrane. The catalysed reaction is a quinone + NADH + 5 H(+)(in) = a quinol + NAD(+) + 4 H(+)(out). NDH-1 shuttles electrons from NADH, via FMN and iron-sulfur (Fe-S) centers, to quinones in the respiratory chain. The immediate electron acceptor for the enzyme in this species is believed to be ubiquinone. Couples the redox reaction to proton translocation (for every two electrons transferred, four hydrogen ions are translocated across the cytoplasmic membrane), and thus conserves the redox energy in a proton gradient. The sequence is that of NADH-quinone oxidoreductase subunit I from Beijerinckia indica subsp. indica (strain ATCC 9039 / DSM 1715 / NCIMB 8712).